The primary structure comprises 633 residues: UvrABC system protein C (633 aa).

The GIY-YIG domain occupies 37–115; it reads PKPGVYRMFG…IKSLKPRFNI (79 aa). The region spanning 225–260 is the UVR domain; sequence NALREDLQTRMAQASEAMDFETAAKLRDRIRAIAAV.

The protein belongs to the UvrC family. Interacts with UvrB in an incision complex.

It is found in the cytoplasm. Functionally, the UvrABC repair system catalyzes the recognition and processing of DNA lesions. UvrC both incises the 5' and 3' sides of the lesion. The N-terminal half is responsible for the 3' incision and the C-terminal half is responsible for the 5' incision. This Maricaulis maris (strain MCS10) (Caulobacter maris) protein is UvrABC system protein C.